A 191-amino-acid polypeptide reads, in one-letter code: Xanthine phosphoribosyltransferase (191 aa).

Positions 20 and 27 each coordinate xanthine. 128 to 132 (ANGQA) lines the 5-phospho-alpha-D-ribose 1-diphosphate pocket. Residue K156 participates in xanthine binding.

The protein belongs to the purine/pyrimidine phosphoribosyltransferase family. Xpt subfamily. In terms of assembly, homodimer.

Its subcellular location is the cytoplasm. The enzyme catalyses XMP + diphosphate = xanthine + 5-phospho-alpha-D-ribose 1-diphosphate. Its pathway is purine metabolism; XMP biosynthesis via salvage pathway; XMP from xanthine: step 1/1. In terms of biological role, converts the preformed base xanthine, a product of nucleic acid breakdown, to xanthosine 5'-monophosphate (XMP), so it can be reused for RNA or DNA synthesis. The polypeptide is Xanthine phosphoribosyltransferase (Levilactobacillus brevis (strain ATCC 367 / BCRC 12310 / CIP 105137 / JCM 1170 / LMG 11437 / NCIMB 947 / NCTC 947) (Lactobacillus brevis)).